Consider the following 283-residue polypeptide: Diaminopimelate epimerase (283 aa).

Residues Asn13, Gln45, and Asn65 each contribute to the substrate site. Cys74 functions as the Proton donor in the catalytic mechanism. Substrate-binding positions include Gly75–Asn76, Asn156, Asn190, and Glu208–Arg209. The active-site Proton acceptor is the Cys217. Residue Gly218–Ser219 participates in substrate binding.

It belongs to the diaminopimelate epimerase family. As to quaternary structure, homodimer.

Its subcellular location is the cytoplasm. The enzyme catalyses (2S,6S)-2,6-diaminopimelate = meso-2,6-diaminopimelate. It participates in amino-acid biosynthesis; L-lysine biosynthesis via DAP pathway; DL-2,6-diaminopimelate from LL-2,6-diaminopimelate: step 1/1. Catalyzes the stereoinversion of LL-2,6-diaminopimelate (L,L-DAP) to meso-diaminopimelate (meso-DAP), a precursor of L-lysine and an essential component of the bacterial peptidoglycan. The protein is Diaminopimelate epimerase of Bartonella henselae (strain ATCC 49882 / DSM 28221 / CCUG 30454 / Houston 1) (Rochalimaea henselae).